We begin with the raw amino-acid sequence, 585 residues long: Pyruvate kinase (585 aa).

Arg32 lines the substrate pocket. K(+) contacts are provided by Asn34, Ser36, Asp66, and Thr67. 34-37 (NFSH) contributes to the ATP binding site. Residues Arg73 and Lys156 each contribute to the ATP site. Glu221 serves as a coordination point for Mg(2+). 3 residues coordinate substrate: Gly244, Asp245, and Thr277. Asp245 is a binding site for Mg(2+).

Belongs to the pyruvate kinase family. The protein in the C-terminal section; belongs to the PEP-utilizing enzyme family. Requires Mg(2+) as cofactor. K(+) serves as cofactor.

The enzyme catalyses pyruvate + ATP = phosphoenolpyruvate + ADP + H(+). It functions in the pathway carbohydrate degradation; glycolysis; pyruvate from D-glyceraldehyde 3-phosphate: step 5/5. This chain is Pyruvate kinase (pyk), found in Staphylococcus aureus (strain MRSA252).